We begin with the raw amino-acid sequence, 25 residues long: Caerin-1.2 (25 aa).

At Leu25 the chain carries Leucine amide.

In terms of tissue distribution, expressed by the skin parotoid and/or rostral glands.

The protein resides in the secreted. In terms of biological role, antibacterial peptide, that adopts an alpha helical conformation which can disrupt bacterial membranes. Each caerin displays a different antimicrobial specificity. The protein is Caerin-1.2 of Ranoidea caerulea (Green tree frog).